Here is a 442-residue protein sequence, read N- to C-terminus: Trigger factor (442 aa).

The region spanning 165–250 is the PPIase FKBP-type domain; it reads DDRVIIDFEG…LQKVMAPELP (86 aa).

Belongs to the FKBP-type PPIase family. Tig subfamily.

The protein resides in the cytoplasm. The catalysed reaction is [protein]-peptidylproline (omega=180) = [protein]-peptidylproline (omega=0). In terms of biological role, involved in protein export. Acts as a chaperone by maintaining the newly synthesized protein in an open conformation. Functions as a peptidyl-prolyl cis-trans isomerase. The polypeptide is Trigger factor (Coxiella burnetii (strain CbuK_Q154) (Coxiella burnetii (strain Q154))).